Reading from the N-terminus, the 165-residue chain is U11/U12 small nuclear ribonucleoprotein 25 kDa protein (165 aa).

In terms of domain architecture, Ubiquitin-like spans 52-137 (MRLSVVKLDG…IRNNSQVTFM (86 aa)). A disordered region spans residues 145-165 (RGRHSKRKKHRLFRSLHKTSS).

Component of the U11/U12 snRNPs that are part of the U12-type spliceosome.

The protein resides in the nucleus. This chain is U11/U12 small nuclear ribonucleoprotein 25 kDa protein (SNRNP25), found in Arabidopsis thaliana (Mouse-ear cress).